Here is a 251-residue protein sequence, read N- to C-terminus: Triosephosphate isomerase (251 aa).

N9 to K11 lines the substrate pocket. H94 (electrophile) is an active-site residue. E167 acts as the Proton acceptor in catalysis. Substrate-binding positions include G173, S213, and G234–G235.

The protein belongs to the triosephosphate isomerase family. In terms of assembly, homodimer.

It is found in the cytoplasm. The enzyme catalyses D-glyceraldehyde 3-phosphate = dihydroxyacetone phosphate. It participates in carbohydrate biosynthesis; gluconeogenesis. Its pathway is carbohydrate degradation; glycolysis; D-glyceraldehyde 3-phosphate from glycerone phosphate: step 1/1. In terms of biological role, involved in the gluconeogenesis. Catalyzes stereospecifically the conversion of dihydroxyacetone phosphate (DHAP) to D-glyceraldehyde-3-phosphate (G3P). The sequence is that of Triosephosphate isomerase from Finegoldia magna (strain ATCC 29328 / DSM 20472 / WAL 2508) (Peptostreptococcus magnus).